A 358-amino-acid chain; its full sequence is Leukotriene B4 receptor 2 (358 aa).

Residues 1 to 24 (MSVCYRPPGNETLLSWKTSRATGT) lie on the Extracellular side of the membrane. Asparagine 10 carries an N-linked (GlcNAc...) asparagine glycan. The chain crosses the membrane as a helical span at residues 25 to 45 (AFLLLAALLGLPGNGFVVWSL). The Cytoplasmic segment spans residues 46 to 60 (AGWRPARGRPLAATL). The chain crosses the membrane as a helical span at residues 61-81 (VLHLALADGAVLLLTPLFVAF). Topologically, residues 82-96 (LTRQAWPLGQAGCKA) are extracellular. Residues 97–117 (VYYVCALSMYASVLLTGLLSL) traverse the membrane as a helical segment. Residues 118–140 (QRCLAVTRPFLAPRLRSPALARR) are Cytoplasmic-facing. A helical membrane pass occupies residues 141–161 (LLLAVWLAALLLAVPAAVYRH). At 162 to 185 (LWRDRVCQLCHPSPVHAAAHLSLE) the chain is on the extracellular side. A helical transmembrane segment spans residues 186 to 206 (TLTAFVLPFGLMLGCYSVTLA). Over 207 to 224 (RLRGARWGSGRHGARVGR) the chain is Cytoplasmic. Residues 225-245 (LVSAIVLAFGLLWAPYHAVNL) traverse the membrane as a helical segment. At 246-275 (LQAVAALAPPEGALAKLGGAGQAARAGTTA) the chain is on the extracellular side. Residues 276–296 (LAFFSSSVNPVLYVFTAGDLL) form a helical membrane-spanning segment. Residues 297–358 (PRAGPRFLTR…MEKDGPEWDL (62 aa)) lie on the Cytoplasmic side of the membrane. A disordered region spans residues 311-358 (SGEARGGGRSREGTMELRTTPQLKVVGQGRGNGDPGGGMEKDGPEWDL). Positions 338–348 (QGRGNGDPGGG) are enriched in gly residues. Positions 349–358 (MEKDGPEWDL) are enriched in basic and acidic residues.

It belongs to the G-protein coupled receptor 1 family. Widely expressed.

Its subcellular location is the cell membrane. Its function is as follows. Low-affinity receptor for leukotrienes including leukotriene B4. Mediates chemotaxis of granulocytes and macrophages. The response is mediated via G-proteins that activate a phosphatidylinositol-calcium second messenger system. The rank order of affinities for the leukotrienes is LTB4 &gt; 12-epi-LTB4 &gt; LTB5 &gt; LTB3. The sequence is that of Leukotriene B4 receptor 2 (LTB4R2) from Homo sapiens (Human).